The chain runs to 822 residues: Collagen alpha chain CG42342 (822 aa).

2 disordered regions span residues 1–45 (MRKH…VEAP) and 66–99 (RLAP…KERP). At 1–104 (MRKHKAPPSG…SKERPRPTVR (104 aa)) the chain is on the cytoplasmic side. The segment covering 11 to 25 (SPRTMAQDNSQSEPS) has biased composition (polar residues). Low complexity predominate over residues 76-94 (INNSNNNSNISNNSSNSSS). Residues 105–125 (FISLLHVASYVLCLCAFSFAL) form a helical; Signal-anchor for type II membrane protein membrane-spanning segment. At 126–822 (YGNVRQTRLE…EYQDNLHNNE (697 aa)) the chain is on the extracellular side. The stretch at 131–162 (QTRLEQRMQRLQQLDARIVELELRLEQQQLLH) forms a coiled coil. Disordered regions lie at residues 169-188 (QVLA…NGSQ), 205-297 (VSHL…GHPG), and 345-822 (LKGE…HNNE). The stretch at 194–222 (VRRELHRLRRDVSHLQLTRRQQRRQAAEA) forms a coiled coil. Collagen-like domains are found at residues 241–299 (QPGP…PGMD), 350–409 (GEPG…KGDR), 430–469 (GPPG…GKRG), 493–526 (RGPP…PGSL), 527–586 (GPRG…KGDK), 621–680 (GPPG…SGKA), and 681–740 (GIPG…KGEQ). The segment covering 242–251 (PGPPGPPGPP) has biased composition (pro residues). The span at 284–293 (PGDKGQKGDV) shows a compositional bias: basic and acidic residues. The segment covering 360–402 (EAGQPGAPGERGPPGEIGAQGPQGEAGQPGVAGPPGVAGAPGT) has biased composition (low complexity). Over residues 403 to 412 (KGDKGDRGDR) the composition is skewed to basic and acidic residues. Residues 431-443 (PPGPAGPPGPPGE) are compositionally biased toward pro residues. The segment covering 504-517 (KDGRDGRDGSKGEP) has biased composition (basic and acidic residues). A compositionally biased stretch (low complexity) spans 522–540 (EPGSLGPRGLDGLPGEPGI). The segment covering 567–579 (LMGPPGLPGPPGY) has biased composition (pro residues). Positions 583–602 (KGDKGDRGDSYRKMRRRQDD) are enriched in basic and acidic residues. Pro residues predominate over residues 619-628 (PPGPPGPMGP). Positions 638 to 655 (RGLDGRKGDPGEKGHKGD) are enriched in basic and acidic residues. Over residues 658 to 668 (PMGLPGPMGMR) the composition is skewed to low complexity. The stretch at 790 to 822 (TSDYEQEEEEDDEQAEDNENEYDEYQDNLHNNE) forms a coiled coil. Acidic residues predominate over residues 793-815 (YEQEEEEDDEQAEDNENEYDEYQ).

It localises to the cell membrane. This chain is Collagen alpha chain CG42342, found in Drosophila melanogaster (Fruit fly).